We begin with the raw amino-acid sequence, 448 residues long: Histidinol dehydrogenase (448 aa).

NAD(+) contacts are provided by Tyr-136, Gln-197, and Asn-220. Ser-243, Gln-265, and His-268 together coordinate substrate. Residues Gln-265 and His-268 each coordinate Zn(2+). Catalysis depends on proton acceptor residues Glu-333 and His-334. Residues His-334, Asp-367, Glu-421, and His-426 each coordinate substrate. Asp-367 is a binding site for Zn(2+). His-426 is a binding site for Zn(2+).

Belongs to the histidinol dehydrogenase family. Zn(2+) is required as a cofactor.

The enzyme catalyses L-histidinol + 2 NAD(+) + H2O = L-histidine + 2 NADH + 3 H(+). It participates in amino-acid biosynthesis; L-histidine biosynthesis; L-histidine from 5-phospho-alpha-D-ribose 1-diphosphate: step 9/9. Functionally, catalyzes the sequential NAD-dependent oxidations of L-histidinol to L-histidinaldehyde and then to L-histidine. This Pseudomonas syringae pv. syringae (strain B728a) protein is Histidinol dehydrogenase.